The following is a 187-amino-acid chain: Ribosome-recycling factor (187 aa).

Belongs to the RRF family.

It is found in the cytoplasm. Responsible for the release of ribosomes from messenger RNA at the termination of protein biosynthesis. May increase the efficiency of translation by recycling ribosomes from one round of translation to another. The polypeptide is Ribosome-recycling factor (Xanthobacter autotrophicus (strain ATCC BAA-1158 / Py2)).